Consider the following 345-residue polypeptide: Protein GAMETE CELL DEFECTIVE 1, mitochondrial (345 aa).

The transit peptide at 1 to 43 directs the protein to the mitochondrion; that stretch reads MLALRKTLLHGRLPAAPPAAAAAAIASRIPALLRRLSSSPGDG. The segment at 36-81 is disordered; it reads LSSSPGDGQGGDEWGSSWSTGITKEHFDGSDAAVGRPVTSPSKPVS.

As to expression, expressed in roots, stems, leaves and florets.

It is found in the mitochondrion. Its function is as follows. Essential for fertility (male and female gametophyte functions and development). Required for the integrity of female gametic mitochondria. Involved in embryo apical-basal patterning, and particularly dorsal-ventral patterning, during early embryogenesis, and endosperm free nucleus positioning and development as well as early endosperm development, probably by modulating the expression pattern of related genes (e.g. AL1, MYB3/AL2, CYP78A13/GE, PNH1, HAZ1, MPK6 and OSH1). Has function in triggering of endosperm programmed cell death (PCD) leading to syncytial endosperm cellularization and starchy endosperm cell maturation. Implicated in central vacuole dynamics necessary for microspore development leading to pollen production, and for pollen development and germination. The chain is Protein GAMETE CELL DEFECTIVE 1, mitochondrial from Oryza sativa subsp. japonica (Rice).